Here is a 569-residue protein sequence, read N- to C-terminus: Sulfite reductase [NADPH] hemoprotein beta-component (569 aa).

4 residues coordinate [4Fe-4S] cluster: C433, C439, C478, and C482. Siroheme is bound at residue C482.

It belongs to the nitrite and sulfite reductase 4Fe-4S domain family. In terms of assembly, alpha(8)-beta(8). The alpha component is a flavoprotein, the beta component is a hemoprotein. Siroheme serves as cofactor. Requires [4Fe-4S] cluster as cofactor.

The catalysed reaction is hydrogen sulfide + 3 NADP(+) + 3 H2O = sulfite + 3 NADPH + 4 H(+). The protein operates within sulfur metabolism; hydrogen sulfide biosynthesis; hydrogen sulfide from sulfite (NADPH route): step 1/1. Its function is as follows. Component of the sulfite reductase complex that catalyzes the 6-electron reduction of sulfite to sulfide. This is one of several activities required for the biosynthesis of L-cysteine from sulfate. This is Sulfite reductase [NADPH] hemoprotein beta-component from Shewanella sediminis (strain HAW-EB3).